The chain runs to 142 residues: Glia maturation factor gamma (142 aa).

Residue S2 is modified to N-acetylserine. Residues 4 to 139 enclose the ADF-H domain; the sequence is SLVVCDVDPE…NETWLKEKLA (136 aa).

The protein belongs to the actin-binding proteins ADF family. GMF subfamily. In terms of tissue distribution, expressed in rat thymus, testis, and spleen. Is present predominantly in proliferative and differentiative organs.

In Rattus norvegicus (Rat), this protein is Glia maturation factor gamma (Gmfg).